The chain runs to 388 residues: MNLHEYQGKQLFAEYGLPVSKGFAVDTPEEAAEACDKIGGSEWVVKAQVHAGGRGKAGGVKLVKSKEDAKAFAQQWLGKNLVTYQTDANGQPVSKILVESCTDIDKELYLGAVVDRSSRRIVFMASTEGGVDIEKVAHDTPEKILKVTIDPLVGAQPYQGRELAFQLGLKGDQIKQFTHIFVGLAKLFQDYDLALLEVNPLVIKKDGNLHCLDAKINIDSNALYRQPKLRAMHDPSQDDAREAHAQKWELNYVALEGNIGCMVNGAGLAMGTMDIVNLHGGKPANFLDVGGGATKERVTEAFKIILSDSNVKAVLVNIFGGIVRCDMIAEGIIGAVKEVGVKVPVVVRLEGNNAELGAKVLAESGLNIIAATSLTDAAQQVVKAAEGK.

Residues 9-244 (KQLFAEYGLP…PSQDDAREAH (236 aa)) enclose the ATP-grasp domain. ATP contacts are provided by residues Lys46, 53 to 55 (GRG), Glu99, Thr102, and Glu107. Asn199 and Asp213 together coordinate Mg(2+). Residues Asn264 and 321–323 (GIV) contribute to the substrate site.

This sequence belongs to the succinate/malate CoA ligase beta subunit family. In terms of assembly, heterotetramer of two alpha and two beta subunits. Mg(2+) serves as cofactor.

The catalysed reaction is succinate + ATP + CoA = succinyl-CoA + ADP + phosphate. The enzyme catalyses GTP + succinate + CoA = succinyl-CoA + GDP + phosphate. Its pathway is carbohydrate metabolism; tricarboxylic acid cycle; succinate from succinyl-CoA (ligase route): step 1/1. Functionally, succinyl-CoA synthetase functions in the citric acid cycle (TCA), coupling the hydrolysis of succinyl-CoA to the synthesis of either ATP or GTP and thus represents the only step of substrate-level phosphorylation in the TCA. The beta subunit provides nucleotide specificity of the enzyme and binds the substrate succinate, while the binding sites for coenzyme A and phosphate are found in the alpha subunit. The chain is Succinate--CoA ligase [ADP-forming] subunit beta from Pseudomonas aeruginosa (strain UCBPP-PA14).